The sequence spans 291 residues: Protease HtpX (291 aa).

A run of 2 helical transmembrane segments spans residues 4 to 24 and 32 to 52; these read IILF…ILSF and ISGL…ISLL. H139 serves as a coordination point for Zn(2+). Residue E140 is part of the active site. Residue H143 coordinates Zn(2+). 2 helical membrane passes run 158–178 and 192–212; these read IVNT…SSIL and WVYI…ASII. Residue E221 participates in Zn(2+) binding.

This sequence belongs to the peptidase M48B family. Requires Zn(2+) as cofactor.

The protein localises to the cell membrane. The protein is Protease HtpX of Buchnera aphidicola subsp. Baizongia pistaciae (strain Bp).